Here is a 101-residue protein sequence, read N- to C-terminus: Small ribosomal subunit protein bS6 (101 aa).

This sequence belongs to the bacterial ribosomal protein bS6 family.

Binds together with bS18 to 16S ribosomal RNA. The sequence is that of Small ribosomal subunit protein bS6 from Oleidesulfovibrio alaskensis (strain ATCC BAA-1058 / DSM 17464 / G20) (Desulfovibrio alaskensis).